The following is a 375-amino-acid chain: Arsenite methyltransferase (375 aa).

A Phosphoserine modification is found at Ser-335.

Belongs to the methyltransferase superfamily. Arsenite methyltransferase family.

The protein localises to the cytoplasm. It is found in the cytosol. It carries out the reaction arsenic triglutathione + [thioredoxin]-dithiol + S-adenosyl-L-methionine + 2 H2O = methylarsonous acid + [thioredoxin]-disulfide + 3 glutathione + S-adenosyl-L-homocysteine + H(+). The catalysed reaction is arsenic triglutathione + 2 [thioredoxin]-dithiol + 2 S-adenosyl-L-methionine + H2O = dimethylarsinous acid + 2 [thioredoxin]-disulfide + 3 glutathione + 2 S-adenosyl-L-homocysteine + 2 H(+). It catalyses the reaction arsenic triglutathione + 3 [thioredoxin]-dithiol + 3 S-adenosyl-L-methionine = trimethylarsine + 3 [thioredoxin]-disulfide + 3 glutathione + 3 S-adenosyl-L-homocysteine + 3 H(+). Functionally, catalyzes the transfer of a methyl group from AdoMet to trivalent arsenicals producing methylated and dimethylated arsenicals. It methylates arsenite to form methylarsonate, Me-AsO(3)H(2), which is reduced by methylarsonate reductase to methylarsonite, Me-As(OH)2. Methylarsonite is also a substrate and it is converted into the much less toxic compound dimethylarsinate (cacodylate), Me(2)As(O)-OH. The polypeptide is Arsenite methyltransferase (AS3MT) (Homo sapiens (Human)).